Here is a 271-residue protein sequence, read N- to C-terminus: Cytosolic Fe-S cluster assembly factor NUBP2 (271 aa).

Met-1 carries the post-translational modification N-acetylmethionine. 22–29 (GKGGVGKS) is an ATP binding site. The [4Fe-4S] cluster site is built by Cys-196 and Cys-199.

Belongs to the Mrp/NBP35 ATP-binding proteins family. NUBP2/CFD1 subfamily. Heterotetramer of 2 NUBP1 and 2 NUBP2 chains. Interacts with KIFC1. Interacts with NUBP1. Requires [4Fe-4S] cluster as cofactor. In terms of tissue distribution, widely expressed with highest expression in skeletal muscle.

It is found in the nucleus. The protein resides in the cytoplasm. The protein localises to the cytoskeleton. It localises to the microtubule organizing center. Its subcellular location is the centrosome. It is found in the cilium axoneme. The protein resides in the centriole. Functionally, component of the cytosolic iron-sulfur (Fe/S) protein assembly (CIA) machinery. Required for maturation of extramitochondrial Fe-S proteins. The NUBP1-NUBP2 heterotetramer forms a Fe-S scaffold complex, mediating the de novo assembly of an Fe-S cluster and its transfer to target apoproteins. Negatively regulates cilium formation and structure. This Homo sapiens (Human) protein is Cytosolic Fe-S cluster assembly factor NUBP2.